Reading from the N-terminus, the 1046-residue chain is Protein HBT1 (1046 aa).

Disordered regions lie at residues 1-455 (MNMN…AAEK), 469-894 (DYQQ…LGGA), and 908-1046 (PSLI…RSEI). Serine 41 is modified (phosphoserine). Positions 81-96 (KDSETPHEDTEADANR) are enriched in basic and acidic residues. 3 stretches are compositionally biased toward polar residues: residues 98–149 (ANVT…SPPT), 175–191 (IATT…TSPV), and 228–301 (ANTG…NTDS). Serine 303 carries the phosphoserine modification. A compositionally biased stretch (polar residues) spans 327 to 341 (VYTSTGPKSNVSSGM). Serine 363 carries the phosphoserine modification. Polar residues-rich tracts occupy residues 389–408 (QTGL…QQTM) and 420–429 (GFVSQQPSYH). The segment covering 430–455 (DSNKNIQHPEKNKVDNKNISERAAEK) has biased composition (basic and acidic residues). A compositionally biased stretch (polar residues) spans 488-498 (YSSSAGKNKNL). Serine 491 carries the post-translational modification Phosphoserine. The segment covering 529–538 (GHMKYNDNGR) has biased composition (basic and acidic residues). Polar residues predominate over residues 548 to 559 (QAGSQNTNNNID). Serine 561 bears the Phosphoserine mark. Residues 570-582 (GLSNDATTRNNVV) are compositionally biased toward polar residues. The span at 586–597 (MKDEDMNEDSTK) shows a compositional bias: basic and acidic residues. Residues 605–619 (YLDDVEDYHENDIDD) show a composition bias toward acidic residues. The segment covering 621 to 630 (SNAKKNDLYS) has biased composition (basic and acidic residues). A Phosphoserine modification is found at serine 671. The span at 742 to 756 (FTNNPETGTTGNVDT) shows a compositional bias: polar residues. The segment covering 773–782 (DDSKNTDTHL) has biased composition (basic and acidic residues). 2 stretches are compositionally biased toward polar residues: residues 792–802 (NSRSGDTTYSK) and 837–855 (SSEQ…NQEY). Tyrosine 855 is subject to Phosphotyrosine. Phosphoserine is present on serine 857. The span at 868-890 (KVLEEDAPGYKREVDLKNKRRTD) shows a compositional bias: basic and acidic residues. The segment covering 922–951 (DTNTSSSQKPSEGTYPETTSYSIHNETTSQ) has biased composition (polar residues). The span at 952–963 (GRKVSVGSMGSG) shows a compositional bias: low complexity. Over residues 964–976 (KSKHHHNHHRHSR) the composition is skewed to basic residues. A Phosphoserine modification is found at serine 1005. Positions 1006-1019 (DEGEQDYHDDEQGE) are enriched in acidic residues. A Phosphoserine modification is found at serine 1034.

As to quaternary structure, conjugated with HUB1. HUB1 has not the classical C-terminal Gly residue, so it is still unknown how conjugation may occur.

It is found in the cytoplasm. Functionally, polarity-determining protein which forms a conjugate with the ubiquitin-like modifier HUB1. Involved in bud site selection and cellular morphogenesis during conjugation. Required for survival during stationary phase. The sequence is that of Protein HBT1 (HBT1) from Saccharomyces cerevisiae (strain ATCC 204508 / S288c) (Baker's yeast).